A 254-amino-acid chain; its full sequence is tRNA (guanine-N(1)-)-methyltransferase (254 aa).

Residues glycine 112 and 131–136 (IGDYIL) each bind S-adenosyl-L-methionine.

This sequence belongs to the RNA methyltransferase TrmD family. As to quaternary structure, homodimer.

It is found in the cytoplasm. It carries out the reaction guanosine(37) in tRNA + S-adenosyl-L-methionine = N(1)-methylguanosine(37) in tRNA + S-adenosyl-L-homocysteine + H(+). In terms of biological role, specifically methylates guanosine-37 in various tRNAs. The polypeptide is tRNA (guanine-N(1)-)-methyltransferase (Sulfurihydrogenibium sp. (strain YO3AOP1)).